Here is a 101-residue protein sequence, read N- to C-terminus: Large ribosomal subunit protein uL24 (101 aa).

The protein belongs to the universal ribosomal protein uL24 family. Part of the 50S ribosomal subunit.

One of two assembly initiator proteins, it binds directly to the 5'-end of the 23S rRNA, where it nucleates assembly of the 50S subunit. In terms of biological role, one of the proteins that surrounds the polypeptide exit tunnel on the outside of the subunit. The chain is Large ribosomal subunit protein uL24 from Clostridioides difficile (strain 630) (Peptoclostridium difficile).